The following is a 441-amino-acid chain: Ankyrin repeat and MYND domain-containing protein 2 (441 aa).

ANK repeat units follow at residues 45–74, 79–108, and 159–188; these read NGMT…DVNC, HGYT…ETDV, and KLAG…NPLL. Cys-320, Cys-323, Cys-332, Cys-335, Cys-341, Cys-345, His-353, and Cys-357 together coordinate Zn(2+). An MYND-type zinc finger spans residues 320–357; it reads CTTCGEKGASKRCSVCKMVIYCDQTCQKTHWFTHKKIC. A compositionally biased stretch (basic and acidic residues) spans 374-384; sequence EKRQEENHGKL. Residues 374–441 are disordered; sequence EKRQEENHGK…APAGPQVSEE (68 aa).

As to quaternary structure, interacts with the retinal-specific guanylyl cyclase GC1.

Its subcellular location is the cell projection. The protein resides in the cilium. Functionally, may be involved in the trafficking of signaling proteins to the cilia. This chain is Ankyrin repeat and MYND domain-containing protein 2 (ANKMY2), found in Homo sapiens (Human).